A 313-amino-acid polypeptide reads, in one-letter code: Biotin synthase (313 aa).

Residues 38–262 (REVQISTLLS…TMPHARVRLS (225 aa)) form the Radical SAM core domain. 3 residues coordinate [4Fe-4S] cluster: Cys-53, Cys-57, and Cys-60. Residues Cys-97, Cys-128, Cys-188, and Arg-260 each contribute to the [2Fe-2S] cluster site.

The protein belongs to the radical SAM superfamily. Biotin synthase family. In terms of assembly, homodimer. Requires [4Fe-4S] cluster as cofactor. [2Fe-2S] cluster is required as a cofactor.

It carries out the reaction (4R,5S)-dethiobiotin + (sulfur carrier)-SH + 2 reduced [2Fe-2S]-[ferredoxin] + 2 S-adenosyl-L-methionine = (sulfur carrier)-H + biotin + 2 5'-deoxyadenosine + 2 L-methionine + 2 oxidized [2Fe-2S]-[ferredoxin]. Its pathway is cofactor biosynthesis; biotin biosynthesis; biotin from 7,8-diaminononanoate: step 2/2. Functionally, catalyzes the conversion of dethiobiotin (DTB) to biotin by the insertion of a sulfur atom into dethiobiotin via a radical-based mechanism. This chain is Biotin synthase, found in Granulibacter bethesdensis (strain ATCC BAA-1260 / CGDNIH1).